We begin with the raw amino-acid sequence, 359 residues long: tRNA/tmRNA (uracil-C(5))-methyltransferase (359 aa).

The S-adenosyl-L-methionine site is built by Gln183, Tyr211, Asn216, Glu232, and Asp292. Residue Cys317 is the Nucleophile of the active site. Glu351 (proton acceptor) is an active-site residue.

The protein belongs to the class I-like SAM-binding methyltransferase superfamily. RNA M5U methyltransferase family. TrmA subfamily.

The catalysed reaction is uridine(54) in tRNA + S-adenosyl-L-methionine = 5-methyluridine(54) in tRNA + S-adenosyl-L-homocysteine + H(+). It catalyses the reaction uridine(341) in tmRNA + S-adenosyl-L-methionine = 5-methyluridine(341) in tmRNA + S-adenosyl-L-homocysteine + H(+). Dual-specificity methyltransferase that catalyzes the formation of 5-methyluridine at position 54 (m5U54) in all tRNAs, and that of position 341 (m5U341) in tmRNA (transfer-mRNA). The sequence is that of tRNA/tmRNA (uracil-C(5))-methyltransferase from Pseudomonas fluorescens (strain Pf0-1).